Reading from the N-terminus, the 435-residue chain is Proline and serine-rich protein 2 (435 aa).

Residues 1-10 show a composition bias toward basic and acidic residues; it reads MPVTHRKSDA. Positions 1 to 22 are disordered; it reads MPVTHRKSDASDMNSDTSPSCR. S8 bears the Phosphoserine mark. Positions 11-20 are enriched in polar residues; sequence SDMNSDTSPS. Residue S43 is modified to Phosphoserine. A Phosphothreonine modification is found at T45. Composition is skewed to low complexity over residues 92–102 and 113–126; these read PSLEESTSSPS and PAPG…LPEG. Disordered regions lie at residues 92–276 and 295–420; these read PSLE…RAAV and AFPA…SEEA. A Phosphothreonine modification is found at T146. Residues 146–169 show a composition bias toward pro residues; sequence TPPPPDPPAPETLLAPPPLPSTPD. S166 carries the phosphoserine modification. T167 carries the phosphothreonine modification. Phosphoserine is present on residues S179, S212, and S215. Residues 228 to 237 are compositionally biased toward low complexity; the sequence is PAARGPRSGD. Position 252 is an asymmetric dimethylarginine; alternate (R252). R252 carries the post-translational modification Omega-N-methylarginine; alternate. Residues 302-311 show a composition bias toward gly residues; it reads AGEGAPGGGS. Phosphoserine is present on S312. R320 carries the omega-N-methylarginine; alternate modification. R320 is modified (dimethylated arginine; alternate). Omega-N-methylarginine is present on R378. S400 carries the post-translational modification Phosphoserine. R414 bears the Omega-N-methylarginine mark.

The polypeptide is Proline and serine-rich protein 2 (PROSER2) (Homo sapiens (Human)).